Here is a 645-residue protein sequence, read N- to C-terminus: Acetyl-coenzyme A synthetase (645 aa).

CoA-binding positions include 190 to 193 (RGGK) and T308. Residues 384–386 (GEP), 408–413 (DTWWQT), D497, and R512 each bind ATP. Position 520 (S520) interacts with CoA. R523 provides a ligand contact to ATP. Positions 534, 536, and 539 each coordinate Mg(2+). Residue K606 is modified to N6-acetyllysine.

This sequence belongs to the ATP-dependent AMP-binding enzyme family. It depends on Mg(2+) as a cofactor. In terms of processing, acetylated. Deacetylation by the SIR2-homolog deacetylase activates the enzyme.

It carries out the reaction acetate + ATP + CoA = acetyl-CoA + AMP + diphosphate. Functionally, catalyzes the conversion of acetate into acetyl-CoA (AcCoA), an essential intermediate at the junction of anabolic and catabolic pathways. AcsA undergoes a two-step reaction. In the first half reaction, AcsA combines acetate with ATP to form acetyl-adenylate (AcAMP) intermediate. In the second half reaction, it can then transfer the acetyl group from AcAMP to the sulfhydryl group of CoA, forming the product AcCoA. The protein is Acetyl-coenzyme A synthetase of Alcanivorax borkumensis (strain ATCC 700651 / DSM 11573 / NCIMB 13689 / SK2).